A 402-amino-acid polypeptide reads, in one-letter code: Speedy protein E5 (402 aa).

The interval 1 to 89 is disordered; it reads MDRTETRFRK…EEPEKELAPE (89 aa). Residues 16-39 show a composition bias toward polar residues; it reads EKITTSRQPQPQNEQSPQRSTSGY. Positions 76-89 are enriched in acidic residues; that stretch reads DESAEEPEKELAPE.

Belongs to the Speedy/Ringo family.

This Homo sapiens (Human) protein is Speedy protein E5 (SPDYE5).